A 325-amino-acid polypeptide reads, in one-letter code: Delta(1)-pyrroline-2-carboxylate reductase (325 aa).

The protein belongs to the ornithine cyclodeaminase/mu-crystallin family.

The catalysed reaction is L-proline + NAD(+) = 1-pyrroline-2-carboxylate + NADH + H(+). It carries out the reaction L-proline + NADP(+) = 1-pyrroline-2-carboxylate + NADPH + H(+). Catalyzes the reduction of Delta(1)-pyrroline-2-carboxylate (Pyr2C) to L-proline, using preferentially NADPH over NADH as the electron donor. Is likely involved in a degradation pathway that converts trans-3-hydroxy-L-proline (t3LHyp) to L-proline, which allows B.cereus to grow on t3LHyp as a sole carbon source. The polypeptide is Delta(1)-pyrroline-2-carboxylate reductase (Bacillus cereus (strain ATCC 14579 / DSM 31 / CCUG 7414 / JCM 2152 / NBRC 15305 / NCIMB 9373 / NCTC 2599 / NRRL B-3711)).